We begin with the raw amino-acid sequence, 101 residues long: NAD(P)H-quinone oxidoreductase subunit 4L, chloroplastic (101 aa).

The next 3 helical transmembrane spans lie at 2–22, 32–52, and 61–81; these read MLEHVLVLGAYLFSIGIYGLI, MCLELILNAVNINLVTFSDFF, and ILSIFVIAIAAAEAAIGLAIV.

It belongs to the complex I subunit 4L family. As to quaternary structure, NDH is composed of at least 16 different subunits, 5 of which are encoded in the nucleus.

It localises to the plastid. Its subcellular location is the chloroplast thylakoid membrane. It carries out the reaction a plastoquinone + NADH + (n+1) H(+)(in) = a plastoquinol + NAD(+) + n H(+)(out). The catalysed reaction is a plastoquinone + NADPH + (n+1) H(+)(in) = a plastoquinol + NADP(+) + n H(+)(out). NDH shuttles electrons from NAD(P)H:plastoquinone, via FMN and iron-sulfur (Fe-S) centers, to quinones in the photosynthetic chain and possibly in a chloroplast respiratory chain. The immediate electron acceptor for the enzyme in this species is believed to be plastoquinone. Couples the redox reaction to proton translocation, and thus conserves the redox energy in a proton gradient. This Buxus microphylla (Littleleaf boxwood) protein is NAD(P)H-quinone oxidoreductase subunit 4L, chloroplastic.